The primary structure comprises 425 residues: Histone-binding protein RBBP4-A (425 aa).

At A2 the chain carries N-acetylalanine. 7 WD repeats span residues 32–125 (YDLV…THDG), 126–175 (EVNR…RLRG), 176–223 (HQKE…KTIF), 225–270 (GHTA…HSVD), 271–314 (AHTA…HSFE), 315–371 (SHKD…FIHG), and 372–404 (GHTA…VWQM).

Belongs to the WD repeat RBAP46/RBAP48/MSI1 family. Binds directly to histone H4, probably via helix 1 of the histone fold, a region that is not accessible when histone H4 is in chromatin. Probably forms a large corepressor complex that contains ncor1, sin3a, hdac1-A and/or hdac1-B, hdac2, rbbp4-A and/or rbbp4-B and possibly rbbp7.

The protein localises to the nucleus. It localises to the chromosome. It is found in the telomere. Functionally, core histone-binding subunit that may target chromatin assembly factors, chromatin remodeling factors and histone deacetylases to their histone substrates in a manner that is regulated by nucleosomal DNA. Component of several complexes which regulate chromatin metabolism. The protein is Histone-binding protein RBBP4-A (rbbp4-a) of Xenopus laevis (African clawed frog).